Reading from the N-terminus, the 834-residue chain is Meiotic sister-chromatid recombination protein 3 (834 aa).

Disordered regions lie at residues 75-136 (PAAA…QPRT), 251-291 (EETE…TGSL), 343-378 (RKLA…KQPL), and 458-479 (VRRS…KKLT). Polar residues predominate over residues 343 to 368 (RKLAQPQQGQNQRRTVSFTQGSIDHM).

It is found in the cell membrane. Its function is as follows. May be involved in the control of meiotic sister-chromatid recombination. The sequence is that of Meiotic sister-chromatid recombination protein 3 (MSC3) from Candida glabrata (strain ATCC 2001 / BCRC 20586 / JCM 3761 / NBRC 0622 / NRRL Y-65 / CBS 138) (Yeast).